Consider the following 184-residue polypeptide: ATP synthase subunit b, chloroplastic (184 aa).

The helical transmembrane segment at 27–49 (LATNPINLSVVLGVLIFFGKGVL) threads the bilayer.

It belongs to the ATPase B chain family. As to quaternary structure, F-type ATPases have 2 components, F(1) - the catalytic core - and F(0) - the membrane proton channel. F(1) has five subunits: alpha(3), beta(3), gamma(1), delta(1), epsilon(1). F(0) has four main subunits: a(1), b(1), b'(1) and c(10-14). The alpha and beta chains form an alternating ring which encloses part of the gamma chain. F(1) is attached to F(0) by a central stalk formed by the gamma and epsilon chains, while a peripheral stalk is formed by the delta, b and b' chains.

The protein resides in the plastid. Its subcellular location is the chloroplast thylakoid membrane. F(1)F(0) ATP synthase produces ATP from ADP in the presence of a proton or sodium gradient. F-type ATPases consist of two structural domains, F(1) containing the extramembraneous catalytic core and F(0) containing the membrane proton channel, linked together by a central stalk and a peripheral stalk. During catalysis, ATP synthesis in the catalytic domain of F(1) is coupled via a rotary mechanism of the central stalk subunits to proton translocation. In terms of biological role, component of the F(0) channel, it forms part of the peripheral stalk, linking F(1) to F(0). This Platanus occidentalis (Sycamore) protein is ATP synthase subunit b, chloroplastic.